Reading from the N-terminus, the 154-residue chain is Deoxyuridine 5'-triphosphate nucleotidohydrolase (154 aa).

Residues arginine 64–glycine 66, asparagine 77, threonine 81–aspartate 83, and lysine 91 each bind substrate.

It belongs to the dUTPase family. Homotrimer. It depends on Mg(2+) as a cofactor.

The enzyme catalyses dUTP + H2O = dUMP + diphosphate + H(+). It functions in the pathway pyrimidine metabolism; dUMP biosynthesis; dUMP from dCTP (dUTP route): step 2/2. Its function is as follows. This enzyme is involved in nucleotide metabolism: it produces dUMP, the immediate precursor of thymidine nucleotides and it decreases the intracellular concentration of dUTP so that uracil cannot be incorporated into DNA. This is Deoxyuridine 5'-triphosphate nucleotidohydrolase from Mycobacterium bovis (strain BCG / Pasteur 1173P2).